Reading from the N-terminus, the 424-residue chain is Serine--tRNA ligase (424 aa).

L-serine is bound at residue 230–232; the sequence is TAE. 261-263 is a binding site for ATP; it reads RSE. L-serine is bound at residue Glu284. Position 348-351 (348-351) interacts with ATP; sequence EISS. Ser384 contributes to the L-serine binding site.

Belongs to the class-II aminoacyl-tRNA synthetase family. Type-1 seryl-tRNA synthetase subfamily. Homodimer. The tRNA molecule binds across the dimer.

The protein resides in the cytoplasm. It carries out the reaction tRNA(Ser) + L-serine + ATP = L-seryl-tRNA(Ser) + AMP + diphosphate + H(+). The catalysed reaction is tRNA(Sec) + L-serine + ATP = L-seryl-tRNA(Sec) + AMP + diphosphate + H(+). It participates in aminoacyl-tRNA biosynthesis; selenocysteinyl-tRNA(Sec) biosynthesis; L-seryl-tRNA(Sec) from L-serine and tRNA(Sec): step 1/1. Its function is as follows. Catalyzes the attachment of serine to tRNA(Ser). Is also able to aminoacylate tRNA(Sec) with serine, to form the misacylated tRNA L-seryl-tRNA(Sec), which will be further converted into selenocysteinyl-tRNA(Sec). The sequence is that of Serine--tRNA ligase from Desulfatibacillum aliphaticivorans.